The sequence spans 260 residues: Ribose-5-phosphate isomerase (260 aa).

This sequence belongs to the ribose 5-phosphate isomerase family.

It is found in the cytoplasm. It catalyses the reaction aldehydo-D-ribose 5-phosphate = D-ribulose 5-phosphate. It functions in the pathway carbohydrate degradation; pentose phosphate pathway; D-ribose 5-phosphate from D-ribulose 5-phosphate (non-oxidative stage): step 1/1. The chain is Ribose-5-phosphate isomerase (RKI1) from Candida glabrata (strain ATCC 2001 / BCRC 20586 / JCM 3761 / NBRC 0622 / NRRL Y-65 / CBS 138) (Yeast).